The sequence spans 480 residues: Glucosylglycerol phosphorylase (480 aa).

The active-site Nucleophile is aspartate 190. Position 194 (tyrosine 194) interacts with substrate. The Proton donor role is filled by glutamate 231. Position 336 (glutamine 336) interacts with substrate.

The protein belongs to the glycosyl hydrolase 13 family. Sucrose phosphorylase subfamily.

It catalyses the reaction 2-O-(alpha-D-glucopyranosyl)glycerol + phosphate = alpha-D-glucose 1-phosphate + glycerol. Catalyzes the reversible phosphorolysis of 2-O-alpha-D-glucosylglycerol with retention of the anomeric configuration, forming alpha-D-glucose 1-phosphate and glycerol. Has most likely a catabolic role, either regulating the intracellular levels of glucosylglycerol, which acts as a compatible solute, or degrading it when the environmental conditions change. Cannot catalyze the phosphorolysis of sucrose or glucosylglycerate. The protein is Glucosylglycerol phosphorylase of Marinobacter adhaerens (strain DSM 23420 / HP15).